The primary structure comprises 122 residues: Large ribosomal subunit protein uL14 (122 aa).

It belongs to the universal ribosomal protein uL14 family. As to quaternary structure, part of the 50S ribosomal subunit. Forms a cluster with proteins L3 and L19. In the 70S ribosome, L14 and L19 interact and together make contacts with the 16S rRNA in bridges B5 and B8.

Functionally, binds to 23S rRNA. Forms part of two intersubunit bridges in the 70S ribosome. This chain is Large ribosomal subunit protein uL14, found in Alkaliphilus metalliredigens (strain QYMF).